A 616-amino-acid polypeptide reads, in one-letter code: Dihydroxy-acid dehydratase (616 aa).

A Mg(2+)-binding site is contributed by aspartate 81. Cysteine 122 lines the [2Fe-2S] cluster pocket. Mg(2+)-binding residues include aspartate 123 and lysine 124. Lysine 124 bears the N6-carboxylysine mark. Cysteine 195 is a [2Fe-2S] cluster binding site. Residue glutamate 491 participates in Mg(2+) binding. Serine 517 serves as the catalytic Proton acceptor.

This sequence belongs to the IlvD/Edd family. Homodimer. [2Fe-2S] cluster serves as cofactor. Requires Mg(2+) as cofactor.

The catalysed reaction is (2R)-2,3-dihydroxy-3-methylbutanoate = 3-methyl-2-oxobutanoate + H2O. It catalyses the reaction (2R,3R)-2,3-dihydroxy-3-methylpentanoate = (S)-3-methyl-2-oxopentanoate + H2O. It participates in amino-acid biosynthesis; L-isoleucine biosynthesis; L-isoleucine from 2-oxobutanoate: step 3/4. Its pathway is amino-acid biosynthesis; L-valine biosynthesis; L-valine from pyruvate: step 3/4. In terms of biological role, functions in the biosynthesis of branched-chain amino acids. Catalyzes the dehydration of (2R,3R)-2,3-dihydroxy-3-methylpentanoate (2,3-dihydroxy-3-methylvalerate) into 2-oxo-3-methylpentanoate (2-oxo-3-methylvalerate) and of (2R)-2,3-dihydroxy-3-methylbutanoate (2,3-dihydroxyisovalerate) into 2-oxo-3-methylbutanoate (2-oxoisovalerate), the penultimate precursor to L-isoleucine and L-valine, respectively. This is Dihydroxy-acid dehydratase from Shewanella sediminis (strain HAW-EB3).